Here is a 292-residue protein sequence, read N- to C-terminus: Nitrogenase iron protein 1 (292 aa).

ATP is bound at residue 12–19 (GKGGIGKS). C101 is a binding site for [4Fe-4S] cluster. R104 is subject to ADP-ribosylarginine; by dinitrogenase reductase ADP-ribosyltransferase. [4Fe-4S] cluster is bound at residue C135.

The protein belongs to the NifH/BchL/ChlL family. As to quaternary structure, homodimer. It depends on [4Fe-4S] cluster as a cofactor. In terms of processing, the reversible ADP-ribosylation of Arg-104 inactivates the nitrogenase reductase and regulates nitrogenase activity.

It carries out the reaction N2 + 8 reduced [2Fe-2S]-[ferredoxin] + 16 ATP + 16 H2O = H2 + 8 oxidized [2Fe-2S]-[ferredoxin] + 2 NH4(+) + 16 ADP + 16 phosphate + 6 H(+). Its function is as follows. The key enzymatic reactions in nitrogen fixation are catalyzed by the nitrogenase complex, which has 2 components: the iron protein and the molybdenum-iron protein. This is Nitrogenase iron protein 1 (nifH1) from Paenibacillus durus (Paenibacillus azotofixans).